We begin with the raw amino-acid sequence, 490 residues long: Phosphoglucosamine mutase (490 aa).

Residue S139 is the Phosphoserine intermediate of the active site. Residues S139, D279, D281, and D283 each contribute to the Mg(2+) site. Position 139 is a phosphoserine (S139).

Belongs to the phosphohexose mutase family. Requires Mg(2+) as cofactor. In terms of processing, activated by phosphorylation.

The enzyme catalyses alpha-D-glucosamine 1-phosphate = D-glucosamine 6-phosphate. Catalyzes the conversion of glucosamine-6-phosphate to glucosamine-1-phosphate. This is Phosphoglucosamine mutase from Nostoc punctiforme (strain ATCC 29133 / PCC 73102).